Consider the following 218-residue polypeptide: Peptidyl-prolyl cis-trans isomerase FKBP7 (218 aa).

The N-terminal stretch at 1–19 is a signal peptide; it reads MNLLFRLAVFLSLWCCSDA. Residues Asn41 and Asn128 are each glycosylated (N-linked (GlcNAc...) asparagine). Positions 49–141 constitute a PPIase FKBP-type domain; it reads GDLLNAHYDG…MFEIELYAVT (93 aa). EF-hand domains are found at residues 141-176 and 185-218; these read TKGP…DFEK and YQKA…HDEL. Ca(2+) contacts are provided by Asp154, Asp156, Asp158, Gln160, Glu165, Asp198, Asn200, Asp202, and Glu209. The interval 197 to 218 is disordered; it reads NDHNGDGFISPKEYNVHQHDEL. Residues 215 to 218 carry the Prevents secretion from ER motif; it reads HDEL.

Post-translationally, glycosylated. As to expression, expressed at highest levels in heart, lung and testis. Weakly expressed in kidney and lymph node. Little or no expression detected in brain, thymus, spleen and liver.

It localises to the endoplasmic reticulum lumen. It carries out the reaction [protein]-peptidylproline (omega=180) = [protein]-peptidylproline (omega=0). PPIases accelerate the folding of proteins during protein synthesis. The polypeptide is Peptidyl-prolyl cis-trans isomerase FKBP7 (Fkbp7) (Mus musculus (Mouse)).